A 57-amino-acid chain; its full sequence is Large ribosomal subunit protein bL32 (57 aa).

The segment at methionine 1 to lysine 37 is disordered.

Belongs to the bacterial ribosomal protein bL32 family.

The chain is Large ribosomal subunit protein bL32 from Escherichia fergusonii (strain ATCC 35469 / DSM 13698 / CCUG 18766 / IAM 14443 / JCM 21226 / LMG 7866 / NBRC 102419 / NCTC 12128 / CDC 0568-73).